Here is a 252-residue protein sequence, read N- to C-terminus: N-glycosylase/DNA lyase (252 aa).

Residues Gln32, Ser60, and Trp71 each coordinate 8-oxoguanine. The interval 129–193 (KTYYSDMEKL…KDSRIEKYTL (65 aa)) is helix-hairpin-helix. Catalysis depends on Lys153, which acts as the Schiff-base intermediate with DNA. Positions 157 and 183 each coordinate 8-oxoguanine. Asp185 is an active-site residue. 2 residues coordinate 8-oxoguanine: Asp219 and Trp223.

Belongs to the archaeal N-glycosylase/DNA lyase (AGOG) family.

It catalyses the reaction 2'-deoxyribonucleotide-(2'-deoxyribose 5'-phosphate)-2'-deoxyribonucleotide-DNA = a 3'-end 2'-deoxyribonucleotide-(2,3-dehydro-2,3-deoxyribose 5'-phosphate)-DNA + a 5'-end 5'-phospho-2'-deoxyribonucleoside-DNA + H(+). In terms of biological role, DNA repair enzyme that is part of the base excision repair (BER) pathway; protects from oxidative damage by removing the major product of DNA oxidation, 8-oxoguanine (GO), from single- and double-stranded DNA substrates. This chain is N-glycosylase/DNA lyase, found in Methanococcus maripaludis (strain DSM 14266 / JCM 13030 / NBRC 101832 / S2 / LL).